The chain runs to 310 residues: Alpha/beta hydrolase domain-containing protein 17A (310 aa).

Residues S190, D255, and H284 each act as charge relay system in the active site. S307 bears the Phosphoserine mark.

This sequence belongs to the AB hydrolase superfamily. ABHD17 family. Post-translationally, palmitoylated on cysteine residues located in a cysteine cluster at the N-terminus which promotes membrane localization. Palmitoylation is required for post-synaptic localization and for depalmitoylating activity towards DLG4/PSD95.

Its subcellular location is the cell membrane. The protein resides in the endosome membrane. It is found in the cell projection. It localises to the dendritic spine. The protein localises to the postsynaptic density membrane. The catalysed reaction is S-hexadecanoyl-L-cysteinyl-[protein] + H2O = L-cysteinyl-[protein] + hexadecanoate + H(+). Hydrolyzes fatty acids from S-acylated cysteine residues in proteins. Has depalmitoylating activity towards NRAS. Has depalmitoylating activity towards DLG4/PSD95. May have depalmitoylating activity towards MAP6. The sequence is that of Alpha/beta hydrolase domain-containing protein 17A from Bos taurus (Bovine).